A 429-amino-acid polypeptide reads, in one-letter code: Phosphoribosylamine--glycine ligase (429 aa).

Positions 109–316 constitute an ATP-grasp domain; that stretch reads KDFLARHQIP…LVDLCLAACD (208 aa). 135 to 196 contacts ATP; the sequence is LREKGAPIVI…EEFLDGEEAS (62 aa). Mg(2+)-binding residues include Glu-286 and Asn-288.

Belongs to the GARS family. Monomer. It depends on Mg(2+) as a cofactor. Mn(2+) is required as a cofactor.

It catalyses the reaction 5-phospho-beta-D-ribosylamine + glycine + ATP = N(1)-(5-phospho-beta-D-ribosyl)glycinamide + ADP + phosphate + H(+). It participates in purine metabolism; IMP biosynthesis via de novo pathway; N(1)-(5-phospho-D-ribosyl)glycinamide from 5-phospho-alpha-D-ribose 1-diphosphate: step 2/2. In Salmonella typhimurium (strain LT2 / SGSC1412 / ATCC 700720), this protein is Phosphoribosylamine--glycine ligase.